Reading from the N-terminus, the 635-residue chain is Threonine--tRNA ligase (635 aa).

Residues 1–144 (MQLLLIHSDY…RSIRPEGTQR (144 aa)) form an editing domain region. The segment at 215–514 (PHVELMRRLE…TEEGKVPMLP (300 aa)) is catalytic. Zn(2+) is bound by residues Cys307, His359, and His483.

Belongs to the class-II aminoacyl-tRNA synthetase family. Homodimer. It depends on Zn(2+) as a cofactor.

Its subcellular location is the cytoplasm. It carries out the reaction tRNA(Thr) + L-threonine + ATP = L-threonyl-tRNA(Thr) + AMP + diphosphate + H(+). Catalyzes the attachment of threonine to tRNA(Thr) in a two-step reaction: L-threonine is first activated by ATP to form Thr-AMP and then transferred to the acceptor end of tRNA(Thr). Also edits incorrectly charged L-seryl-tRNA(Thr). This chain is Threonine--tRNA ligase, found in Methanosarcina barkeri (strain Fusaro / DSM 804).